The primary structure comprises 307 residues: Type 2A encapsulin shell protein (307 aa).

Belongs to the encapsulin family. Family 2A subfamily. As to quaternary structure, the encapsulin nanocompartment is formed by 60 subunits; monomers form pentamers which assemble to form shells. There are 12 charged pores where the pentamers meet as well as 3-fold axis channels and dimer channels. Isolated from bacteria in a complex with cysteine desulfurase (AC Q9KII6).

It localises to the encapsulin nanocompartment. Its subcellular location is the cell membrane. In terms of biological role, shell component of a type 2A encapsulin nanocompartment. Forms encapsulin nanocompartments about 24 nm in diameter from 60 monomers, probably involved in sulfur metabolism. Probably encapsulates cysteine desulfurase. In Mycolicibacterium paratuberculosis (strain ATCC BAA-968 / K-10) (Mycobacterium paratuberculosis), this protein is Type 2A encapsulin shell protein.